The following is a 137-amino-acid chain: Large ribosomal subunit protein uL16 (137 aa).

The protein belongs to the universal ribosomal protein uL16 family. In terms of assembly, part of the 50S ribosomal subunit.

Functionally, binds 23S rRNA and is also seen to make contacts with the A and possibly P site tRNAs. This chain is Large ribosomal subunit protein uL16, found in Solidesulfovibrio magneticus (strain ATCC 700980 / DSM 13731 / RS-1) (Desulfovibrio magneticus).